Consider the following 604-residue polypeptide: Vacuolar protein sorting-associated protein 64 (604 aa).

The disordered stretch occupies residues 1–89 (MVELEKRRRP…SVHQVSQQQQ (89 aa)). Residues 1–578 (MVELEKRRRP…LGVVEGKRTR (578 aa)) are Cytoplasmic-facing. Residues 22–34 (DQSNSQGMTKTPE) show a composition bias toward polar residues. 2 stretches are compositionally biased toward low complexity: residues 44 to 57 (RARSNSRSSGSRSN) and 77 to 89 (SPPSVHQVSQQQQ). The region spanning 185–257 (LKLGRPVTNS…NGTFVNGVKI (73 aa)) is the FHA domain. A coiled-coil region spans residues 404–563 (NLINMIKTLT…EEKKDTEDTL (160 aa)). A disordered region spans residues 539 to 561 (INNDNNAKVKQNDSREEKKDTED). A compositionally biased stretch (basic and acidic residues) spans 548–560 (KQNDSREEKKDTE). Residues 579–598 (VSKGMLFGVVAISFGLVATA) form a helical; Anchor for type IV membrane protein membrane-spanning segment. Over 599–604 (VKQLPQ) the chain is Lumenal.

In terms of assembly, component of a complex at least composed of FAR3, FAR7, FAR8, FAR10, FAR11 and VPS64.

It is found in the endoplasmic reticulum membrane. Participates in the control of the reentry into the cell cycle following pheromone treatment. Involved in vacuolar protein sorting. This Saccharomyces cerevisiae (strain ATCC 204508 / S288c) (Baker's yeast) protein is Vacuolar protein sorting-associated protein 64 (VPS64).